The primary structure comprises 154 residues: 6,7-dimethyl-8-ribityllumazine synthase (154 aa).

Residues F23, A57–E59, and A81–I83 each bind 5-amino-6-(D-ribitylamino)uracil. Position 86-87 (A86–T87) interacts with (2S)-2-hydroxy-3-oxobutyl phosphate. H89 (proton donor) is an active-site residue. F114 serves as a coordination point for 5-amino-6-(D-ribitylamino)uracil. A (2S)-2-hydroxy-3-oxobutyl phosphate-binding site is contributed by R128.

Belongs to the DMRL synthase family.

It carries out the reaction (2S)-2-hydroxy-3-oxobutyl phosphate + 5-amino-6-(D-ribitylamino)uracil = 6,7-dimethyl-8-(1-D-ribityl)lumazine + phosphate + 2 H2O + H(+). Its pathway is cofactor biosynthesis; riboflavin biosynthesis; riboflavin from 2-hydroxy-3-oxobutyl phosphate and 5-amino-6-(D-ribitylamino)uracil: step 1/2. Its function is as follows. Catalyzes the formation of 6,7-dimethyl-8-ribityllumazine by condensation of 5-amino-6-(D-ribitylamino)uracil with 3,4-dihydroxy-2-butanone 4-phosphate. This is the penultimate step in the biosynthesis of riboflavin. In Nautilia profundicola (strain ATCC BAA-1463 / DSM 18972 / AmH), this protein is 6,7-dimethyl-8-ribityllumazine synthase.